A 297-amino-acid chain; its full sequence is Pyrroline-5-carboxylate reductase 1 (297 aa).

It belongs to the pyrroline-5-carboxylate reductase family.

Its subcellular location is the cytoplasm. The catalysed reaction is L-proline + NADP(+) = (S)-1-pyrroline-5-carboxylate + NADPH + 2 H(+). It carries out the reaction L-proline + NAD(+) = (S)-1-pyrroline-5-carboxylate + NADH + 2 H(+). It functions in the pathway amino-acid biosynthesis; L-proline biosynthesis; L-proline from L-glutamate 5-semialdehyde: step 1/1. Its function is as follows. Catalyzes the reduction of 1-pyrroline-5-carboxylate (PCA) to L-proline. In Bacillus subtilis (strain 168), this protein is Pyrroline-5-carboxylate reductase 1 (proH).